Reading from the N-terminus, the 959-residue chain is Atromentin synthetase invA1 (959 aa).

The segment at 59–466 is adenylation (A) domain; that stretch reads DSSIQTKTFS…SGRIKETVIV (408 aa). A Carrier domain is found at 598-676; it reads TPQTETEQTL…SLANYIVALK (79 aa). The segment at 603-673 is thiolation and peptide carrier (T) domain; the sequence is TEQTLAAIYA…VVSSLANYIV (71 aa). Ser635 carries the post-translational modification O-(pantetheine 4'-phosphoryl)serine. Residues 699 to 946 form a thioesterase (TE) domain region; sequence PIFMVHPGVG…LMDFDHVPGF (248 aa).

The protein belongs to the ATP-dependent AMP-binding enzyme family.

Its pathway is secondary metabolite biosynthesis. Its function is as follows. An L-tyrosine:2-oxoglutarate aminotransferase (probably invD) and atromentin synthetase invA1 catalyze consecutive steps to turn over L-tyrosine into atromentin, which represents the generic precursor molecule for the entire terphenylquinone and pulvinic acid family of pigments, which are widely distributed secondary metabolites in homobasidiomycetes. The first step catalyzed by the aminotransferase converts L-tyrosine in to 4-hydroxyphenylpyruvate (4-HPP). Adenylation of two 4-HPP monomers by the invA1 adenylation (A) domain, covalent tethering of the monomers as a thioester and oxoester onto the invA1 thiolation (T) and thioesterase (TE) domains, respectively, and symmetric C-C-bond formation between two monomers catalyzed by the invA1 TE domain leads to atromentin. The protein is Atromentin synthetase invA1 (invA1) of Paxillus involutus (Naked brimcap).